The sequence spans 304 residues: D-alanine--D-alanine ligase (304 aa).

Residues 107 to 300 form the ATP-grasp domain; sequence KRLWQGSGLP…FDELVARILG (194 aa). Residue 134-186 participates in ATP binding; that stretch reads VGYPVIVKPAREGSSLGMSRVEGPEELAEAYRVAAAYDDTVLAEAWVEGEEYT. Mg(2+) contacts are provided by Asp-254, Glu-267, and Asn-269.

Belongs to the D-alanine--D-alanine ligase family. Mg(2+) is required as a cofactor. It depends on Mn(2+) as a cofactor.

It localises to the cytoplasm. The catalysed reaction is 2 D-alanine + ATP = D-alanyl-D-alanine + ADP + phosphate + H(+). It functions in the pathway cell wall biogenesis; peptidoglycan biosynthesis. Functionally, cell wall formation. In Halorhodospira halophila (strain DSM 244 / SL1) (Ectothiorhodospira halophila (strain DSM 244 / SL1)), this protein is D-alanine--D-alanine ligase.